Consider the following 194-residue polypeptide: Glycerol-3-phosphate acyltransferase (194 aa).

5 consecutive transmembrane segments (helical) span residues 3–23 (IALL…LIVG), 47–67 (VLGK…GVLP), 78–97 (IHGI…PIYL), 112–132 (ILGV…TLLF), and 153–173 (LFFD…LIII).

Belongs to the PlsY family. In terms of assembly, probably interacts with PlsX.

It localises to the cell membrane. The enzyme catalyses an acyl phosphate + sn-glycerol 3-phosphate = a 1-acyl-sn-glycero-3-phosphate + phosphate. The protein operates within lipid metabolism; phospholipid metabolism. Catalyzes the transfer of an acyl group from acyl-phosphate (acyl-PO(4)) to glycerol-3-phosphate (G3P) to form lysophosphatidic acid (LPA). This enzyme utilizes acyl-phosphate as fatty acyl donor, but not acyl-CoA or acyl-ACP. In Macrococcus caseolyticus (strain JCSC5402) (Macrococcoides caseolyticum), this protein is Glycerol-3-phosphate acyltransferase.